A 198-amino-acid polypeptide reads, in one-letter code: Recombination protein RecR (198 aa).

The C4-type zinc finger occupies 56–71 (CDICGNVSEEPTCRIC). A Toprim domain is found at 79–175 (AVVCVVEEPK…NVTRLASGLP (97 aa)).

It belongs to the RecR family.

Functionally, may play a role in DNA repair. It seems to be involved in an RecBC-independent recombinational process of DNA repair. It may act with RecF and RecO. The chain is Recombination protein RecR from Saccharopolyspora erythraea (strain ATCC 11635 / DSM 40517 / JCM 4748 / NBRC 13426 / NCIMB 8594 / NRRL 2338).